The following is a 303-amino-acid chain: Nitrogenase iron protein (303 aa).

G11–S18 lines the ATP pocket. C112 contacts [4Fe-4S] cluster. R115 carries the ADP-ribosylarginine; by dinitrogenase reductase ADP-ribosyltransferase modification. C147 lines the [4Fe-4S] cluster pocket.

This sequence belongs to the NifH/BchL/ChlL family. In terms of assembly, homodimer. The cofactor is [4Fe-4S] cluster. The reversible ADP-ribosylation of Arg-115 inactivates the nitrogenase reductase and regulates nitrogenase activity.

It carries out the reaction N2 + 8 reduced [2Fe-2S]-[ferredoxin] + 16 ATP + 16 H2O = H2 + 8 oxidized [2Fe-2S]-[ferredoxin] + 2 NH4(+) + 16 ADP + 16 phosphate + 6 H(+). The key enzymatic reactions in nitrogen fixation are catalyzed by the nitrogenase complex, which has 2 components: the iron protein and the molybdenum-iron protein. In Wolinella succinogenes (strain ATCC 29543 / DSM 1740 / CCUG 13145 / JCM 31913 / LMG 7466 / NCTC 11488 / FDC 602W) (Vibrio succinogenes), this protein is Nitrogenase iron protein.